A 166-amino-acid chain; its full sequence is Urease accessory protein UreE (166 aa).

It belongs to the UreE family.

The protein resides in the cytoplasm. Its function is as follows. Involved in urease metallocenter assembly. Binds nickel. Probably functions as a nickel donor during metallocenter assembly. This Azotobacter vinelandii (strain DJ / ATCC BAA-1303) protein is Urease accessory protein UreE.